Here is a 562-residue protein sequence, read N- to C-terminus: Phosphoglucomutase-1 (562 aa).

An N-acetylmethionine modification is found at Met1. An N6-acetyllysine modification is found at Lys16. Arg23 contacts alpha-D-glucose 1,6-bisphosphate. At Thr115 the chain carries Phosphothreonine. Ser117 is an alpha-D-glucose 1,6-bisphosphate binding site. Catalysis depends on Ser117, which acts as the Phosphoserine intermediate. Mg(2+) is bound at residue Ser117. A phosphoserine mark is found at Ser117 and Ser134. The residue at position 185 (Thr185) is a Phosphothreonine. Phosphoserine is present on residues Ser201, Ser206, and Ser213. Mg(2+) contacts are provided by Asp288, Asp290, and Asp292. Positions 292 and 293 each coordinate alpha-D-glucose 1,6-bisphosphate. Lys349 bears the N6-acetyllysine mark. Phosphotyrosine is present on Tyr353. Residue Thr357 coordinates alpha-D-glucose 1,6-bisphosphate. Ser369 carries the phosphoserine modification. Alpha-D-glucose 1,6-bisphosphate-binding residues include Glu376, Ser378, and Lys389. Phosphoserine is present on Ser378. Residue Lys419 is modified to N6-succinyllysine. Thr467 is subject to Phosphothreonine; by PAK1. Ser477, Ser485, and Ser505 each carry phosphoserine. Thr507 carries the phosphothreonine modification. 2 positions are modified to phosphoserine: Ser509 and Ser541.

The protein belongs to the phosphohexose mutase family. Monomer. Requires Mg(2+) as cofactor. Phosphorylation at Thr-467 by PAK1 significantly enhances enzymatic activity.

It localises to the cytoplasm. It catalyses the reaction alpha-D-glucose 1-phosphate = alpha-D-glucose 6-phosphate. The catalysed reaction is O-phospho-L-seryl-[protein] + alpha-D-glucose 1-phosphate = alpha-D-glucose 1,6-bisphosphate + L-seryl-[protein]. It carries out the reaction alpha-D-glucose 1,6-bisphosphate + L-seryl-[protein] = O-phospho-L-seryl-[protein] + alpha-D-glucose 6-phosphate. Its activity is regulated as follows. Glucose-1,6-bisphosphate enhances phosphorylation of the active site Ser-117, and thereby increases enzyme activity. Catalyzes the reversible isomerization of alpha-D-glucose 1-phosphate to alpha-D-glucose 6-phosphate. The mechanism proceeds via the intermediate compound alpha-D-glucose 1,6-bisphosphate. This enzyme participates in both the breakdown and synthesis of glucose. The sequence is that of Phosphoglucomutase-1 (PGM1) from Homo sapiens (Human).